Reading from the N-terminus, the 287-residue chain is Homoserine kinase (287 aa).

Position 78-88 (78-88 (PLSRGLGSSST)) interacts with ATP.

This sequence belongs to the GHMP kinase family. Homoserine kinase subfamily.

It is found in the cytoplasm. The catalysed reaction is L-homoserine + ATP = O-phospho-L-homoserine + ADP + H(+). It functions in the pathway amino-acid biosynthesis; L-threonine biosynthesis; L-threonine from L-aspartate: step 4/5. In terms of biological role, catalyzes the ATP-dependent phosphorylation of L-homoserine to L-homoserine phosphate. This is Homoserine kinase from Lactobacillus gasseri (strain ATCC 33323 / DSM 20243 / BCRC 14619 / CIP 102991 / JCM 1131 / KCTC 3163 / NCIMB 11718 / NCTC 13722 / AM63).